We begin with the raw amino-acid sequence, 489 residues long: Squalene monooxygenase (489 aa).

The helical transmembrane segment at 10–30 threads the bilayer; that stretch reads VTYDALIVGAGVIGPCVATAL. Residues 21–22, 41–42, arginine 49, arginine 151, valine 167, aspartate 328, and methionine 341 contribute to the FAD site; these read VI and ER. The next 2 membrane-spanning stretches (helical) occupy residues 426-446 and 464-484; these read FLAG…AVAF and ALLE…PFLV.

Belongs to the squalene monooxygenase family. Requires FAD as cofactor.

The protein resides in the microsome membrane. It localises to the endoplasmic reticulum membrane. The enzyme catalyses squalene + reduced [NADPH--hemoprotein reductase] + O2 = (S)-2,3-epoxysqualene + oxidized [NADPH--hemoprotein reductase] + H2O + H(+). The protein operates within terpene metabolism; lanosterol biosynthesis; lanosterol from farnesyl diphosphate: step 2/3. Its function is as follows. Catalyzes the stereospecific oxidation of squalene to (S)-2,3-epoxysqualene, and is considered to be a rate-limiting enzyme in steroid biosynthesis. This chain is Squalene monooxygenase (ERG1), found in Candida glabrata (strain ATCC 2001 / BCRC 20586 / JCM 3761 / NBRC 0622 / NRRL Y-65 / CBS 138) (Yeast).